A 63-amino-acid chain; its full sequence is UPF0337 protein Atu0782 (63 aa).

The interval 1-63 (MGSTSDKIAG…DAVKGAVDRM (63 aa)) is disordered. The span at 51–63 (KAKDAVKGAVDRM) shows a compositional bias: basic and acidic residues.

The protein belongs to the UPF0337 (CsbD) family.

In Agrobacterium fabrum (strain C58 / ATCC 33970) (Agrobacterium tumefaciens (strain C58)), this protein is UPF0337 protein Atu0782.